Consider the following 233-residue polypeptide: Esterase FUS5 (233 aa).

Residues Ser-105, Asp-159, and His-187 each act as charge relay system in the active site.

This sequence belongs to the LovG family.

Esterase; part of the gene cluster that mediates the biosynthesis of the mycotoxin fusarin C. Within the cluster, FUS1, FUS2, FUS8 and FUS9 are sufficient for fusarin production. The other FUS cluster members are not essential for fusarin C biosynthesis. This is Esterase FUS5 from Gibberella fujikuroi (strain CBS 195.34 / IMI 58289 / NRRL A-6831) (Bakanae and foot rot disease fungus).